The primary structure comprises 81 residues: Putative defensin-like protein 188 (81 aa).

Residues 1–19 (MKNSSLLFILIVVFVISSS) form the signal peptide. 4 cysteine pairs are disulfide-bonded: Cys-31/Cys-81, Cys-37/Cys-57, Cys-43/Cys-75, and Cys-47/Cys-77.

This sequence belongs to the DEFL family.

It localises to the secreted. The polypeptide is Putative defensin-like protein 188 (LCR41) (Arabidopsis thaliana (Mouse-ear cress)).